The sequence spans 228 residues: Endonuclease V (228 aa).

Positions 43 and 109 each coordinate Mg(2+).

Belongs to the endonuclease V family. Mg(2+) is required as a cofactor.

It is found in the cytoplasm. It catalyses the reaction Endonucleolytic cleavage at apurinic or apyrimidinic sites to products with a 5'-phosphate.. Its function is as follows. DNA repair enzyme involved in the repair of deaminated bases. Selectively cleaves double-stranded DNA at the second phosphodiester bond 3' to a deoxyinosine leaving behind the intact lesion on the nicked DNA. The sequence is that of Endonuclease V from Dictyoglomus turgidum (strain DSM 6724 / Z-1310).